The chain runs to 394 residues: Venom metalloproteinase antarease TserMP_A (394 aa).

The first 16 residues, 1 to 16 (MISYLASIFLLATVSA), serve as a signal peptide directing secretion. Positions 17 to 157 (VPSGRVEVVF…NAENVSRMAR (141 aa)) are excised as a propeptide. Residues 162-391 (IVVEYYIVTD…PTASCIFQQC (230 aa)) enclose the Peptidase M12B domain. The cysteines at positions 295 and 386 are disulfide-linked. H319 serves as a coordination point for Zn(2+). The active site involves E320. Residues H323 and H329 each contribute to the Zn(2+) site.

Requires Zn(2+) as cofactor. Contains 4 disulfide bonds. Expressed by the venom gland.

The protein resides in the secreted. With respect to regulation, inhibited by EDTA. Acts as a metalloprotease. Penetrates intact tissue and specifically cleaves the vesicle-associated membrane protein 2 (VAMP2) (part of the SNARE complex) involved in pancreatic secretion, thus disrupting the normal vesicular traffic. This is Venom metalloproteinase antarease TserMP_A from Tityus serrulatus (Brazilian scorpion).